The chain runs to 455 residues: Probable cytosolic iron-sulfur protein assembly protein 1 (455 aa).

WD repeat units follow at residues 31-70 (GHSS…TTSA), 90-129 (GHQR…DGSS), 163-202 (GHES…EFEC), 208-247 (EHSQ…DWFC), 253-292 (GHES…QCEA), 318-365 (YHDR…DEKS), and 380-453 (HASA…YAAT).

Belongs to the WD repeat CIA1 family.

Functionally, essential component of the cytosolic iron-sulfur (Fe/S) protein assembly machinery. Required for the maturation of extramitochondrial Fe/S proteins. This is Probable cytosolic iron-sulfur protein assembly protein 1 from Mycosarcoma maydis (Corn smut fungus).